A 904-amino-acid chain; its full sequence is Essential for maintenance of the cell wall protein 1 (904 aa).

TPR repeat units lie at residues 510–544, 563–596, 603–636, 637–670, 671–704, and 706–739; these read WQLD…ETAL, INEN…GKYV, AKYY…YPLS, FETW…DPYH, ALSW…DAQK, and WKIW…RRDK.

The protein belongs to the TTC27 family.

The protein resides in the cytoplasm. Its subcellular location is the nucleus. Required for the maintenance of the cell wall integrity. This is Essential for maintenance of the cell wall protein 1 (EMW1) from Saccharomyces cerevisiae (strain ATCC 204508 / S288c) (Baker's yeast).